The chain runs to 393 residues: tRNA(Met) cytidine acetate ligase (393 aa).

Residues Gly-81, Asn-142, and Arg-167 each contribute to the ATP site.

Belongs to the TmcAL family.

It is found in the cytoplasm. It catalyses the reaction cytidine(34) in elongator tRNA(Met) + acetate + ATP = N(4)-acetylcytidine(34) in elongator tRNA(Met) + AMP + diphosphate. Functionally, catalyzes the formation of N(4)-acetylcytidine (ac(4)C) at the wobble position of elongator tRNA(Met), using acetate and ATP as substrates. First activates an acetate ion to form acetyladenylate (Ac-AMP) and then transfers the acetyl group to tRNA to form ac(4)C34. This Bacillus cytotoxicus (strain DSM 22905 / CIP 110041 / 391-98 / NVH 391-98) protein is tRNA(Met) cytidine acetate ligase.